Consider the following 341-residue polypeptide: Golgi-associated RAB2 interactor protein 1B (341 aa).

It belongs to the GARIN family. As to expression, expressed in testis (at protein level).

It localises to the golgi apparatus. Its function is as follows. RAB2B effector protein required for accurate acrosome formation and normal male fertility. In complex with RAB2A/RAB2B, seems to suppress excessive vesicle trafficking during acrosome formation. This chain is Golgi-associated RAB2 interactor protein 1B, found in Mus musculus (Mouse).